A 187-amino-acid chain; its full sequence is uncharacterized protein (187 aa).

The chain crosses the membrane as a helical span at residues 3-23 (AIIIFLILFIVGVLIGVGVYY).

Its subcellular location is the membrane. This is an uncharacterized protein from Methanocaldococcus jannaschii (strain ATCC 43067 / DSM 2661 / JAL-1 / JCM 10045 / NBRC 100440) (Methanococcus jannaschii).